We begin with the raw amino-acid sequence, 259 residues long: Trans-4-hydroxycyclohexanecarboxylate dehydrogenase (259 aa).

11 residues coordinate NAD(+): R20, M22, D41, D73, V74, N100, Y164, K168, V197, T199, and T202. Residue Y164 is the Proton acceptor of the active site.

Belongs to the short-chain dehydrogenases/reductases (SDR) family. In terms of assembly, homodimer. Homotetramer.

The enzyme catalyses trans-4-hydroxycyclohexane-1-carboxylate + NAD(+) = 4-oxocyclohexane-1-carboxylate + NADH + H(+). Its activity is regulated as follows. Strongly inhibited by N-bromosuccinimide. Not inhibited by sulfhydryl reagents, such as iodoacetic acid, iodoacetamide, N-ethylmaleimide and p-hydroxymercuribenzoic acid. Functionally, dehydrogenase involved in a cyclohexanecarboxylate (CHCA) degradation pathway. Catalyzes the NAD(+)-dependent dehydrogenation of trans-4-hydroxycyclohexanecarboxylate (trans-4-hydroxyCHCA) to form 4-oxocyclohexanecarboxylate (4-oxoCHCA). Is highly specific for the trans-4-hydroxy derivative and shows only weak activity with cis-4-hydroxyCHCA. Can also catalyze the reverse reaction (4-oxoCHCA reduction) with a higher catalytic efficiency. In the reverse reaction, is highly specific for 4-oxoCHCA and cannot use either the 2-oxo or the 3-oxo homolog as substrate. Cannot use NADP(+). This chain is Trans-4-hydroxycyclohexanecarboxylate dehydrogenase, found in Sinomonas cyclohexanicum (Corynebacterium cyclohexanicum).